The chain runs to 212 residues: Pyridoxine/pyridoxamine 5'-phosphate oxidase (212 aa).

Residues 8–11 (RREY) and lysine 66 each bind substrate. FMN is bound by residues 61 to 66 (RIVLLK), 76 to 77 (FT), arginine 82, lysine 83, and glutamine 105. Tyrosine 123, arginine 127, and serine 131 together coordinate substrate. Residues 140–141 (QS) and tryptophan 185 contribute to the FMN site. Substrate is bound at residue 191–193 (RLH). Arginine 195 contacts FMN.

Belongs to the pyridoxamine 5'-phosphate oxidase family. Homodimer. It depends on FMN as a cofactor.

It carries out the reaction pyridoxamine 5'-phosphate + O2 + H2O = pyridoxal 5'-phosphate + H2O2 + NH4(+). The catalysed reaction is pyridoxine 5'-phosphate + O2 = pyridoxal 5'-phosphate + H2O2. The protein operates within cofactor metabolism; pyridoxal 5'-phosphate salvage; pyridoxal 5'-phosphate from pyridoxamine 5'-phosphate: step 1/1. It functions in the pathway cofactor metabolism; pyridoxal 5'-phosphate salvage; pyridoxal 5'-phosphate from pyridoxine 5'-phosphate: step 1/1. Functionally, catalyzes the oxidation of either pyridoxine 5'-phosphate (PNP) or pyridoxamine 5'-phosphate (PMP) into pyridoxal 5'-phosphate (PLP). The protein is Pyridoxine/pyridoxamine 5'-phosphate oxidase of Shewanella halifaxensis (strain HAW-EB4).